The primary structure comprises 590 residues: V-type ATP synthase alpha chain (590 aa).

232–239 (GPFGSGKT) provides a ligand contact to ATP.

This sequence belongs to the ATPase alpha/beta chains family.

It carries out the reaction ATP + H2O + 4 H(+)(in) = ADP + phosphate + 5 H(+)(out). Its function is as follows. Produces ATP from ADP in the presence of a proton gradient across the membrane. The V-type alpha chain is a catalytic subunit. The sequence is that of V-type ATP synthase alpha chain from Thermoanaerobacter pseudethanolicus (strain ATCC 33223 / 39E) (Clostridium thermohydrosulfuricum).